We begin with the raw amino-acid sequence, 386 residues long: Patatin-17 (386 aa).

The first 23 residues, 1-23 (MATTKSFLILIFMILATTSSTFA), serve as a signal peptide directing secretion. Residues 32–229 (LSIDGGGIRG…TVADPALLSI (198 aa)) form the PNPLA domain. A GXGXXG motif is present at residues 36-41 (GGGIRG). The short motif at 75 to 79 (GTSTG) is the GXSXG element. S77 serves as the catalytic Nucleophile. A glycan (N-linked (GlcNAc...) asparagine) is linked at N202. The active-site Proton acceptor is D215. Residues 215 to 217 (DGA) carry the DGA/G motif. The stretch at 321-384 (ENALTGTTTE…DRKKLRANKA (64 aa)) forms a coiled coil.

Belongs to the patatin family.

The protein resides in the vacuole. Its function is as follows. Non-specific lipolytic acyl hydrolase (LAH), an activity which is thought to be involved in the response of tubers to pathogens. Catalyzes the non-specific hydrolysis of phospholipids, glycolipids, sulfolipids, and mono- and diacylglycerols includng p-nitrophenyl caprate. Confers resistance to southern corn rootworm (SCRW). The sequence is that of Patatin-17 from Solanum cardiophyllum (Heartleaf nightshade).